The sequence spans 163 residues: Nucleotide-binding protein YPDSF_2805 (163 aa).

The protein belongs to the YajQ family.

Nucleotide-binding protein. This chain is Nucleotide-binding protein YPDSF_2805, found in Yersinia pestis (strain Pestoides F).